The primary structure comprises 290 residues: MLKNVHQKASHHTRPFRAWVKLLWQRIDEDNMTTLAGNLAYVSLLSLVPLVAVIFALFAAFPMFSEVSVQLRHFVFANFMPATGDVIQRYIEQFVANSSKMTAVGACGLIVTALLLMYAIDSALNTIWRSKKVRPKVYSFAVYWMILTLGPLLAGASLAISSYLLSLRWASELNTVIDNVLRIFPLILSWLAFWLLYSIVPTLRVPNRDAIVGALVAAILFELGKKGFALYITTFPSYQLIYGVLAVVPILFVWVYWTWCIVLLGAEITVTLGEYRKLKLAAEQEEADQP.

A run of 6 helical transmembrane segments spans residues 44–64 (LLSLVPLVAVIFALFAAFPMF), 104–124 (VGACGLIVTALLLMYAIDSAL), 140–160 (FAVYWMILTLGPLLAGASLAI), 183–203 (IFPLILSWLAFWLLYSIVPTL), 210–230 (AIVGALVAAILFELGKKGFAL), and 244–264 (VLAVVPILFVWVYWTWCIVLL).

Belongs to the UPF0761 family.

It is found in the cell inner membrane. The chain is UPF0761 membrane protein Ent638_4092 from Enterobacter sp. (strain 638).